The following is a 162-amino-acid chain: Ribonuclease P protein component (162 aa).

The tract at residues 1 to 62 is disordered; sequence MDEKDLATQP…GPPKAGGRLL (62 aa). Basic and acidic residues predominate over residues 21–36; sequence GPHEDPRRQERAEAQA.

It belongs to the RnpA family. In terms of assembly, consists of a catalytic RNA component (M1 or rnpB) and a protein subunit.

It catalyses the reaction Endonucleolytic cleavage of RNA, removing 5'-extranucleotides from tRNA precursor.. Its function is as follows. RNaseP catalyzes the removal of the 5'-leader sequence from pre-tRNA to produce the mature 5'-terminus. It can also cleave other RNA substrates such as 4.5S RNA. The protein component plays an auxiliary but essential role in vivo by binding to the 5'-leader sequence and broadening the substrate specificity of the ribozyme. This is Ribonuclease P protein component from Thermus aquaticus.